Here is a 231-residue protein sequence, read N- to C-terminus: Ribonuclease HI (231 aa).

In terms of domain architecture, RNase H type-1 spans 1-146 (MRERAVAACD…ADRAASQAAV (146 aa)). Mg(2+)-binding residues include aspartate 10, glutamate 50, aspartate 72, and aspartate 138. 2 stretches are compositionally biased toward low complexity: residues 148-157 (QEAAGSALGS) and 166-181 (VPAA…SGAA). Disordered regions lie at residues 148-192 (QEAA…SART) and 212-231 (PIAK…VAAG).

This sequence belongs to the RNase H family. Monomer. Mg(2+) is required as a cofactor.

The protein localises to the cytoplasm. It catalyses the reaction Endonucleolytic cleavage to 5'-phosphomonoester.. Its function is as follows. Endonuclease that specifically degrades the RNA of RNA-DNA hybrids. The sequence is that of Ribonuclease HI (rnhA) from Streptomyces coelicolor (strain ATCC BAA-471 / A3(2) / M145).